A 201-amino-acid polypeptide reads, in one-letter code: MSRYRGPCFKKIRRLGYLPGLTSKKPTVKNELRNQLRFSKKSQYRIRLEEKQKLRFHYGLTERQLLKYVRISGKAKGSTGQVLLQLLEMRLDNILFRLGMAATIPQARQFINHRHVLVNGRIVDIPSYRCKPQDIITAKDEQKSKTLIQNYLDSAPRDKLPNHLTVHPFQYKGLINQIIDNKWVGLKINELLVVEYYSRQT.

The region spanning 89-151 is the S4 RNA-binding domain; the sequence is MRLDNILFRL…QKSKTLIQNY (63 aa).

This sequence belongs to the universal ribosomal protein uS4 family. In terms of assembly, part of the 30S ribosomal subunit. Contacts protein S5. The interaction surface between S4 and S5 is involved in control of translational fidelity.

The protein localises to the plastid. Its subcellular location is the chloroplast. In terms of biological role, one of the primary rRNA binding proteins, it binds directly to 16S rRNA where it nucleates assembly of the body of the 30S subunit. Functionally, with S5 and S12 plays an important role in translational accuracy. This Phaseolus vulgaris (Kidney bean) protein is Small ribosomal subunit protein uS4c (rps4).